Consider the following 71-residue polypeptide: Conotoxin Lt11.3 (71 aa).

The first 26 residues, Met1 to Ala26, serve as a signal peptide directing secretion. 4 cysteine pairs are disulfide-bonded: Cys27/Cys41, Cys34/Cys46, Cys40/Cys50, and Cys45/Cys54. Pro57 carries the post-translational modification Proline amide. The propeptide occupies Thr61 to Arg71.

This sequence belongs to the conotoxin I2 superfamily. As to expression, expressed by the venom duct.

The protein resides in the secreted. Functionally, probable neurotoxin. In Conus litteratus (Lettered cone), this protein is Conotoxin Lt11.3.